Reading from the N-terminus, the 105-residue chain is Vacuolar ATPase assembly integral membrane protein VMA21 homolog (105 aa).

A disordered region spans residues 1–26 (MSTKNKKAAGGNGGAPKQTRQQSHDS). The Cytoplasmic portion of the chain corresponds to 1–36 (MSTKNKKAAGGNGGAPKQTRQQSHDSQDYSSFKTVL). A helical transmembrane segment spans residues 37 to 57 (FYCMLIVFLPVLTFFVLKGFV). At 58 to 68 (LDQFLDISEVK) the chain is on the lumenal side. The chain crosses the membrane as a helical span at residues 69 to 89 (VNIASAVGAVVALHVALGLYI). Residues 90–105 (YRAYFGAPGSKASKTD) are Cytoplasmic-facing.

It belongs to the VMA21 family.

It is found in the endoplasmic reticulum membrane. Its subcellular location is the endoplasmic reticulum-Golgi intermediate compartment membrane. The protein resides in the cytoplasmic vesicle. The protein localises to the COPII-coated vesicle membrane. Functionally, required for the assembly of the V0 complex of the vacuolar ATPase (V-ATPase) in the endoplasmic reticulum. In Drosophila yakuba (Fruit fly), this protein is Vacuolar ATPase assembly integral membrane protein VMA21 homolog.